Consider the following 507-residue polypeptide: Alpha-amylase 2 (507 aa).

The first 20 residues, 1-20 (MKFATILSTTALALSSLVAS), serve as a signal peptide directing secretion. A disulfide bond links Cys62 and Cys70. A substrate-binding site is contributed by Trp115. Asn153 contacts Ca(2+). His154 is a binding site for substrate. Cys182 and Cys196 form a disulfide bridge. Ca(2+)-binding residues include Glu194 and Asp207. Asn229 carries an N-linked (GlcNAc...) asparagine glycan. Residue Arg236 coordinates substrate. Ca(2+)-binding residues include Asp238, His242, and Glu262. The active-site Nucleophile is Asp238. Residue 241–242 (KH) coordinates substrate. Residue Glu262 is the Proton donor of the active site. Residue Gly266 coordinates substrate. Cys272 and Cys315 are oxidised to a cystine. Residues Asp329 and Arg376 each contribute to the substrate site. A disulfide bond links Cys470 and Cys505.

The protein belongs to the glycosyl hydrolase 13 family. Ca(2+) serves as cofactor.

It carries out the reaction Endohydrolysis of (1-&gt;4)-alpha-D-glucosidic linkages in polysaccharides containing three or more (1-&gt;4)-alpha-linked D-glucose units.. This is Alpha-amylase 2 (SWA2) from Schwanniomyces occidentalis (Yeast).